The chain runs to 251 residues: uncharacterized protein (251 aa).

Residues 1-22 (MTQLPELGLRSPNNKSPTGPHP) form a disordered region.

This is an uncharacterized protein from Homo sapiens (Human).